The following is a 141-amino-acid chain: Hemoglobin subunit alpha-A/Q/R/T (141 aa).

Residues 1 to 141 (VLSPADKTNV…VSTVLTSKYR (141 aa)) form the Globin domain. Position 3 is a phosphoserine (serine 3). Lysine 7 carries the N6-succinyllysine modification. The residue at position 8 (threonine 8) is a Phosphothreonine. The residue at position 11 (lysine 11) is an N6-succinyllysine. Lysine 16 carries the N6-acetyllysine; alternate modification. Lysine 16 carries the N6-succinyllysine; alternate modification. The residue at position 24 (tyrosine 24) is a Phosphotyrosine. Serine 35 is subject to Phosphoserine. Lysine 40 carries the N6-succinyllysine modification. Serine 49 is modified (phosphoserine). O2 is bound at residue histidine 58. Histidine 87 contributes to the heme b binding site. Serine 102 is modified (phosphoserine). Position 108 is a phosphothreonine (threonine 108). Residues serine 124 and serine 131 each carry the phosphoserine modification. A phosphothreonine mark is found at threonine 134 and threonine 137. Residue serine 138 is modified to Phosphoserine.

It belongs to the globin family. In terms of assembly, heterotetramer of two alpha chains and two beta chains. As to expression, red blood cells.

Involved in oxygen transport from the lung to the various peripheral tissues. In Macaca fascicularis (Crab-eating macaque), this protein is Hemoglobin subunit alpha-A/Q/R/T.